Here is an 82-residue protein sequence, read N- to C-terminus: Protein costars (82 aa).

The protein belongs to the costars family.

Modulates actin dynamics and cell motility. The sequence is that of Protein costars (cosA) from Dictyostelium discoideum (Social amoeba).